Here is a 149-residue protein sequence, read N- to C-terminus: 3-dehydroquinate dehydratase (149 aa).

Y26 functions as the Proton acceptor in the catalytic mechanism. Residues N77, H83, and D90 each coordinate substrate. The active-site Proton donor is H103. Residues L104 to S105 and R114 each bind substrate.

Belongs to the type-II 3-dehydroquinase family. Homododecamer.

It catalyses the reaction 3-dehydroquinate = 3-dehydroshikimate + H2O. It functions in the pathway metabolic intermediate biosynthesis; chorismate biosynthesis; chorismate from D-erythrose 4-phosphate and phosphoenolpyruvate: step 3/7. Catalyzes a trans-dehydration via an enolate intermediate. This chain is 3-dehydroquinate dehydratase (aroQ), found in Haemophilus influenzae (strain ATCC 51907 / DSM 11121 / KW20 / Rd).